The following is a 384-amino-acid chain: FAD-dependent urate hydroxylase (384 aa).

FAD is bound by residues Gly11, 30–31, Ser43, and Val125; that span reads EA. Substrate-binding positions include Asn178, Arg204, and 216 to 218; that span reads YFF. Residues Asp285 and 295–299 each bind FAD; that span reads GQGGC.

Belongs to the FAD-dependent urate hydroxylase family. As to quaternary structure, monomer. Requires FAD as cofactor.

It catalyses the reaction urate + NADH + O2 + H(+) = 5-hydroxyisourate + NAD(+) + H2O. It participates in purine metabolism; urate degradation. In terms of biological role, catalyzes the hydroxylation of urate to 5-hydroxyisourate (HIU). This chain is FAD-dependent urate hydroxylase, found in Klebsiella pneumoniae subsp. pneumoniae (strain ATCC 700721 / MGH 78578).